The primary structure comprises 115 residues: Large ribosomal subunit protein uL24 (115 aa).

Belongs to the universal ribosomal protein uL24 family. In terms of assembly, part of the 50S ribosomal subunit.

Functionally, one of two assembly initiator proteins, it binds directly to the 5'-end of the 23S rRNA, where it nucleates assembly of the 50S subunit. In terms of biological role, one of the proteins that surrounds the polypeptide exit tunnel on the outside of the subunit. The sequence is that of Large ribosomal subunit protein uL24 from Deinococcus deserti (strain DSM 17065 / CIP 109153 / LMG 22923 / VCD115).